The sequence spans 116 residues: Large ribosomal subunit protein uL18 (116 aa).

The protein belongs to the universal ribosomal protein uL18 family. In terms of assembly, part of the 50S ribosomal subunit; part of the 5S rRNA/L5/L18/L25 subcomplex. Contacts the 5S and 23S rRNAs.

In terms of biological role, this is one of the proteins that bind and probably mediate the attachment of the 5S RNA into the large ribosomal subunit, where it forms part of the central protuberance. The polypeptide is Large ribosomal subunit protein uL18 (Shewanella frigidimarina (strain NCIMB 400)).